A 96-amino-acid polypeptide reads, in one-letter code: Putative pterin-4-alpha-carbinolamine dehydratase (96 aa).

The protein belongs to the pterin-4-alpha-carbinolamine dehydratase family.

The catalysed reaction is (4aS,6R)-4a-hydroxy-L-erythro-5,6,7,8-tetrahydrobiopterin = (6R)-L-erythro-6,7-dihydrobiopterin + H2O. The protein is Putative pterin-4-alpha-carbinolamine dehydratase of Prochlorococcus marinus (strain MIT 9313).